The sequence spans 580 residues: Zinc finger protein 271 (580 aa).

18 C2H2-type zinc fingers span residues 78–100 (YNCD…QRTH), 104–126 (YECE…QRIH), 132–154 (YPCS…QRVH), 160–182 (YKCD…QRIH), 188–210 (YQCS…LRIH), 216–238 (YMCN…QRIH), 244–266 (YKCD…QRIH), 272–294 (YPCA…RRIH), 300–322 (YKCS…QRIH), 328–350 (YPCN…QRIH), 356–378 (YPCS…YRIH), 384–406 (YECD…QRIH), 412–434 (YPCN…QRVH), 440–462 (YTCN…QRVH), 468–490 (YHCS…HRVH), 496–518 (YACT…QRIH), 524–545 (YKCM…QRIH), and 551–573 (YPCA…QRVH).

The protein belongs to the krueppel C2H2-type zinc-finger protein family. Selectively expressed in adult testis.

It is found in the nucleus. Functionally, may act to control gene activity during the pachytene stage of meiotic prophase. May function as a transcription activator. This Mus musculus (Mouse) protein is Zinc finger protein 271 (Znf271).